Here is a 465-residue protein sequence, read N- to C-terminus: 5'-adenylylsulfate reductase 1, chloroplastic (465 aa).

A chloroplast-targeting transit peptide spans 1–53 (MAMSVNVSSSSSSGIINSRFGVSLEPKVSQIGSLRLLDRVHVAPVSLNLSGKR). The segment at 73 to 327 (LAATMVAEIA…KAKECGLHKG (255 aa)) is reductase domain. Residues 344–465 (SAVADIFKSE…SLTSFLNLVR (122 aa)) form the Thioredoxin domain. Active-site nucleophile residues include Cys385 and Cys388. Residues Cys385 and Cys388 are joined by a disulfide bond.

This sequence belongs to the APS reductase family. The cofactor is [4Fe-4S] cluster. In terms of tissue distribution, leaves, roots and stem.

It localises to the plastid. It is found in the chloroplast. It catalyses the reaction glutathione disulfide + sulfite + AMP + 2 H(+) = adenosine 5'-phosphosulfate + 2 glutathione. With respect to regulation, stimulated by sodium sulfate &gt; ammonium sulfate and is sensitive to inactivation by 5'AMP. Its function is as follows. Reduces sulfate for Cys biosynthesis. Substrate preference is adenosine-5'-phosphosulfate (APS) &gt;&gt; 3'-phosphoadenosine-5'-phosphosulfate (PAPS). Uses glutathione or DTT as source of protons. The sequence is that of 5'-adenylylsulfate reductase 1, chloroplastic (APR1) from Arabidopsis thaliana (Mouse-ear cress).